The primary structure comprises 137 residues: Large ribosomal subunit protein uL16 (137 aa).

The protein belongs to the universal ribosomal protein uL16 family. Part of the 50S ribosomal subunit.

Binds 23S rRNA and is also seen to make contacts with the A and possibly P site tRNAs. The sequence is that of Large ribosomal subunit protein uL16 from Nitrobacter hamburgensis (strain DSM 10229 / NCIMB 13809 / X14).